Here is a 123-residue protein sequence, read N- to C-terminus: TYMS opposite strand protein (123 aa).

The segment at 57-111 is disordered; it reads MRPLPRRIEVRTKRGPQRPAAPERSPQPRLPPSRHPSRRGPRRHLSGCSAPACRI. Residues 91–101 show a composition bias toward basic residues; it reads HPSRRGPRRHL.

In Homo sapiens (Human), this protein is TYMS opposite strand protein (TYMSOS).